A 345-amino-acid chain; its full sequence is Probable aldo-keto reductase 3 (345 aa).

Residue Tyr63 is the Proton donor of the active site. His130 lines the substrate pocket. Residue Ser209–Gly219 coordinates NADP(+).

The protein belongs to the aldo/keto reductase family.

In Arabidopsis thaliana (Mouse-ear cress), this protein is Probable aldo-keto reductase 3.